Here is a 296-residue protein sequence, read N- to C-terminus: Maltose/maltodextrin transport system permease protein MalG (296 aa).

The Cytoplasmic segment spans residues 1-12 (MAMVQPKSQKLR). The chain crosses the membrane as a helical span at residues 13-35 (LLITHLGLLIFIAAIMFPLLMVI). At 36-88 (AISLREGNFATGSLIPDKISWEHWRLALGFSVEHADGRVTPPPFPVLLWLWNS) the chain is on the periplasmic side. The 197-residue stretch at 85-281 (LWNSVKIAGI…IPITLVFLLA (197 aa)) folds into the ABC transmembrane type-1 domain. The chain crosses the membrane as a helical span at residues 89–111 (VKIAGITAIGIVALSTTCAYAFA). The Cytoplasmic portion of the chain corresponds to 112–123 (RMRFPGKATLLK). The helical transmembrane segment at 124 to 143 (GMLIFQMFPAVLSLVALYAL) threads the bilayer. The Periplasmic segment spans residues 144–152 (FDRLGQYIP). A helical membrane pass occupies residues 153 to 175 (FIGLNTHGGVIFAYLGGIALHVW). Residues 176–204 (TIKGYFETIDSSLEEAAALDGATPWQAFR) lie on the Cytoplasmic side of the membrane. Residues 205–227 (LVLLPLSVPILAVVFILSFIAAI) form a helical membrane-spanning segment. Topologically, residues 228-257 (TEVPVASLLLRDVDSYTLAVGMQQYLNPQN) are periplasmic. Residues 258–280 (YLWGDFAAAAVLSAIPITLVFLL) traverse the membrane as a helical segment. Residues 281 to 296 (AQRWLVNGLTAGGVKG) are Cytoplasmic-facing.

Belongs to the binding-protein-dependent transport system permease family. MalFG subfamily. In terms of assembly, the complex is composed of two ATP-binding proteins (MalK), two transmembrane proteins (MalG and MalF) and a solute-binding protein (MalE).

It localises to the cell inner membrane. Functionally, part of the ABC transporter complex MalEFGK involved in maltose/maltodextrin import. Probably responsible for the translocation of the substrate across the membrane. This is Maltose/maltodextrin transport system permease protein MalG (malG) from Salmonella typhimurium (strain LT2 / SGSC1412 / ATCC 700720).